The chain runs to 164 residues: Disulfide bond formation protein B (164 aa).

Topologically, residues 1-4 (MRII) are cytoplasmic. A helical transmembrane segment spans residues 5–21 (FLLIALICAGLVSYALY). Topologically, residues 22–39 (LQLADGLLPCPLCIFQRM) are periplasmic. Cys-31 and Cys-34 are joined by a disulfide. The chain crosses the membrane as a helical span at residues 40 to 56 (AYWLVGITALFAFIHHP). At 57–62 (QRLGRR) the chain is on the cytoplasmic side. The helical transmembrane segment at 63 to 80 (IYCGLIILFSLAGAIVAG) threads the bilayer. The Periplasmic portion of the chain corresponds to 81 to 136 (RQAWLVRFPEAFECGISPEEAFLNELPLARWWPDMFEANGDCTDGTWQFLSLTIPD). A disulfide bridge links Cys-94 with Cys-122. The chain crosses the membrane as a helical span at residues 137–155 (WSLLIFLAFSLIAGLLWRS). At 156-164 (RSISSSNLK) the chain is on the cytoplasmic side.

The protein belongs to the DsbB family.

Its subcellular location is the cell inner membrane. In terms of biological role, required for disulfide bond formation in some periplasmic proteins. Acts by oxidizing the DsbA protein. The polypeptide is Disulfide bond formation protein B (Nitrosomonas europaea (strain ATCC 19718 / CIP 103999 / KCTC 2705 / NBRC 14298)).